The sequence spans 96 residues: Small ribosomal subunit protein bS6 (96 aa).

The protein belongs to the bacterial ribosomal protein bS6 family.

In terms of biological role, binds together with bS18 to 16S ribosomal RNA. The polypeptide is Small ribosomal subunit protein bS6 (Streptococcus pyogenes serotype M1).